Consider the following 230-residue polypeptide: Endonuclease NucS (230 aa).

This sequence belongs to the NucS endonuclease family.

It localises to the cytoplasm. Functionally, cleaves both 3' and 5' ssDNA extremities of branched DNA structures. The polypeptide is Endonuclease NucS (Corynebacterium glutamicum (strain R)).